A 415-amino-acid chain; its full sequence is Tyrosine--tRNA ligase (415 aa).

A 'HIGH' region motif is present at residues proline 54 to histidine 63. A 'KMSKS' region motif is present at residues lysine 248–serine 252. Lysine 251 contacts ATP. In terms of domain architecture, S4 RNA-binding spans alanine 351–threonine 415.

The protein belongs to the class-I aminoacyl-tRNA synthetase family. TyrS type 2 subfamily. In terms of assembly, homodimer.

It localises to the cytoplasm. It catalyses the reaction tRNA(Tyr) + L-tyrosine + ATP = L-tyrosyl-tRNA(Tyr) + AMP + diphosphate + H(+). In terms of biological role, catalyzes the attachment of tyrosine to tRNA(Tyr) in a two-step reaction: tyrosine is first activated by ATP to form Tyr-AMP and then transferred to the acceptor end of tRNA(Tyr). The chain is Tyrosine--tRNA ligase from Prochlorococcus marinus (strain NATL2A).